We begin with the raw amino-acid sequence, 216 residues long: Adenylate kinase (216 aa).

Position 11-16 (11-16 (GSGKGT)) interacts with ATP. The segment at 31-60 (ATGDLFRKAIECGDELGDTVKSYMERGELV) is NMP. AMP contacts are provided by residues Thr32, Arg37, 58–60 (ELV), 86–89 (GFPR), and Gln93. An LID region spans residues 127–163 (GRWVCRSCQSPYQSGCAEVTKGKCSRCQGGLYQRPDD). Arg128 is an ATP binding site. Residues Cys131, Cys134, Cys150, and Cys153 each contribute to the Zn(2+) site. Arg160 and Arg171 together coordinate AMP. Ala199 is an ATP binding site.

This sequence belongs to the adenylate kinase family. In terms of assembly, monomer.

It is found in the cytoplasm. The enzyme catalyses AMP + ATP = 2 ADP. It functions in the pathway purine metabolism; AMP biosynthesis via salvage pathway; AMP from ADP: step 1/1. In terms of biological role, catalyzes the reversible transfer of the terminal phosphate group between ATP and AMP. Plays an important role in cellular energy homeostasis and in adenine nucleotide metabolism. The polypeptide is Adenylate kinase (Dehalococcoides mccartyi (strain CBDB1)).